A 337-amino-acid polypeptide reads, in one-letter code: Palmitoyltransferase ZDHHC15 (337 aa).

At 1 to 20 (MRRGWKMALSGGLRCCRRVL) the chain is on the cytoplasmic side. The chain crosses the membrane as a helical span at residues 21–41 (SWVPVLVIVLVVLWSYYAYVF). The Lumenal segment spans residues 42-56 (ELCLVTVLSPAEKVI). The helical transmembrane segment at 57–77 (YLILYHAIFVFFAWTYWKSIF) threads the bilayer. The Cytoplasmic segment spans residues 78 to 172 (TLPQQPNQKF…NNCIGFSNYK (95 aa)). The DHHC domain maps to 129-179 (RFCDRCHLIKPDRCHHCSVCAMCVLKMDHHCPWVNNCIGFSNYKFFLQFLA). Zn(2+) is bound by residues C131, C134, H144, C145, C148, C151, and H158. C159 functions as the S-palmitoyl cysteine intermediate in the catalytic mechanism. Residue C165 coordinates Zn(2+). A helical membrane pass occupies residues 173–193 (FFLQFLAYSVLYCLYIATTVF). The Lumenal portion of the chain corresponds to 194 to 210 (SYFIKYWRGELPSVRSK). The chain crosses the membrane as a helical span at residues 211 to 234 (FHVLFLLFVACMFFVSLVILFGYH). Over 235-337 (CWLVSRNKTT…SSSLAVESET (103 aa)) the chain is Cytoplasmic. The disordered stretch occupies residues 293–337 (HSFPMRSMNESQNPLLANEEPWEDNEDDSRDYPEGSSSLAVESET). Over residues 312–321 (EPWEDNEDDS) the composition is skewed to acidic residues. Over residues 327-337 (GSSSLAVESET) the composition is skewed to polar residues.

Belongs to the DHHC palmitoyltransferase family. In terms of processing, autopalmitoylated (in vitro). Expressed mainly in brain.

Its subcellular location is the golgi apparatus membrane. It is found in the postsynaptic density. The enzyme catalyses L-cysteinyl-[protein] + hexadecanoyl-CoA = S-hexadecanoyl-L-cysteinyl-[protein] + CoA. The catalysed reaction is L-cysteinyl-[protein] + tetradecanoyl-CoA = S-tetradecanoyl-L-cysteinyl-[protein] + CoA. It carries out the reaction L-cysteinyl-[protein] + octadecanoyl-CoA = S-octadecanoyl-L-cysteinyl-[protein] + CoA. Its activity is regulated as follows. Inhibited by 2-bromopalmitate. Its function is as follows. Palmitoyltransferase that catalyzes the addition of palmitate onto various protein substrates. Has no stringent fatty acid selectivity and in addition to palmitate can also transfer onto target proteins myristate from tetradecanoyl-CoA and stearate from octadecanoyl-CoA. Palmitoylates IGF2R and SORT1, promoting their partitioning to an endosomal membrane subdomain where they can interact with the retromer cargo-selective complex. Thereby, regulates retrograde transport from endosomes to the Golgi apparatus of these lysosomal sorting receptors and plays a role in trafficking of lysosomal proteins. In the nervous system, catalyzes the palmitoylation of DLG4/PSD95 and regulates its synaptic clustering and function in synaptogenesis. Could be involved in the differentiation of dopaminergic neurons and the development of the diencephalon. Could also catalyze the palmitoylation of GAP43. Could also palmitoylate DNAJC5 and regulate its localization to the Golgi membrane. Could also palmitoylate FYN as shown in vitro. May palmitoylate CALHM3 subunit of gustatory voltage-gated ion channels and modulate channel gating and kinetics. The polypeptide is Palmitoyltransferase ZDHHC15 (Mus musculus (Mouse)).